Consider the following 214-residue polypeptide: MKILVTGFNPFGSEKINPALEAVKLLPSEINGAEVRWVEIPTVFYKSSEVLEAEILRYQPDAVLCIGQAGGRTGLTPERVAINQDDARIPDNEGNQPIDTPIRIDGASAYFSSLPIKAMVQAIKKQGLPAVVSNSAGTFVCNHLMYQALYLVDKKFPNMRAGFMHIPYMMEQVVNKPNTAGMSLCDIVRGIEVAIEAIVDYKDKDLQLVGGETH.

Residues Glu78, Cys141, and His165 contribute to the active site.

This sequence belongs to the peptidase C15 family. In terms of assembly, homotetramer.

The protein resides in the cytoplasm. It catalyses the reaction Release of an N-terminal pyroglutamyl group from a polypeptide, the second amino acid generally not being Pro.. Functionally, removes 5-oxoproline from various penultimate amino acid residues except L-proline. The chain is Pyrrolidone-carboxylate peptidase from Streptococcus pneumoniae (strain 70585).